The primary structure comprises 200 residues: uncharacterized protein (200 aa).

An N-terminal signal peptide occupies residues 1 to 24 (MSRVFSCVLRACVCAGLCCWVCMG). Residues 124 to 200 (GGRDLPMHGA…GEGGDNGEGE (77 aa)) are disordered. Acidic residues predominate over residues 184–200 (LGDEGETGEGGDNGEGE).

This is an uncharacterized protein from Homo sapiens (Human).